A 190-amino-acid chain; its full sequence is Protein GrpE (190 aa).

The segment at 1-41 (MAKEKQEEQQKQTAPENEKAPKKDIKKEASDKKGDQTSKLK) is disordered.

The protein belongs to the GrpE family. In terms of assembly, homodimer.

The protein resides in the cytoplasm. Participates actively in the response to hyperosmotic and heat shock by preventing the aggregation of stress-denatured proteins, in association with DnaK and GrpE. It is the nucleotide exchange factor for DnaK and may function as a thermosensor. Unfolded proteins bind initially to DnaJ; upon interaction with the DnaJ-bound protein, DnaK hydrolyzes its bound ATP, resulting in the formation of a stable complex. GrpE releases ADP from DnaK; ATP binding to DnaK triggers the release of the substrate protein, thus completing the reaction cycle. Several rounds of ATP-dependent interactions between DnaJ, DnaK and GrpE are required for fully efficient folding. This Limosilactobacillus reuteri (strain DSM 20016) (Lactobacillus reuteri) protein is Protein GrpE.